A 379-amino-acid polypeptide reads, in one-letter code: Arginine biosynthesis bifunctional protein ArgJ (379 aa).

Threonine 141, lysine 163, threonine 174, glutamate 252, asparagine 374, and threonine 379 together coordinate substrate. The active-site Nucleophile is the threonine 174.

The protein belongs to the ArgJ family. Heterotetramer of two alpha and two beta chains.

It is found in the cytoplasm. It carries out the reaction N(2)-acetyl-L-ornithine + L-glutamate = N-acetyl-L-glutamate + L-ornithine. The enzyme catalyses L-glutamate + acetyl-CoA = N-acetyl-L-glutamate + CoA + H(+). Its pathway is amino-acid biosynthesis; L-arginine biosynthesis; L-ornithine and N-acetyl-L-glutamate from L-glutamate and N(2)-acetyl-L-ornithine (cyclic): step 1/1. It participates in amino-acid biosynthesis; L-arginine biosynthesis; N(2)-acetyl-L-ornithine from L-glutamate: step 1/4. In terms of biological role, catalyzes two activities which are involved in the cyclic version of arginine biosynthesis: the synthesis of N-acetylglutamate from glutamate and acetyl-CoA as the acetyl donor, and of ornithine by transacetylation between N(2)-acetylornithine and glutamate. This is Arginine biosynthesis bifunctional protein ArgJ from Aquifex aeolicus (strain VF5).